Here is a 373-residue protein sequence, read N- to C-terminus: Ubiquitin domain-containing protein DSK2 (373 aa).

Residues 1 to 76 enclose the Ubiquitin-like domain; that stretch reads MSLNIHIKSG…SVHLVKSQPK (76 aa). Residues Lys13 and Lys76 each participate in a glycyl lysine isopeptide (Lys-Gly) (interchain with G-Cter in ubiquitin) cross-link. The tract at residues 221–270 is disordered; that stretch reads DPNAGMGSAGGAASAFPAPGGDAPEEGSNTNTTSSSNTGNNAGTNAGTNA. The span at 231 to 270 shows a compositional bias: low complexity; it reads GAASAFPAPGGDAPEEGSNTNTTSSSNTGNNAGTNAGTNA. One can recognise a UBA domain in the interval 327–371; sequence PPEERYEHQLRQLNDMGFFDFDRNVAALRRSGGSVQGALDSLLNG.

Its subcellular location is the nucleus. Its function is as follows. Involved, with RAD23 in spindle pole body duplication. Involved in the ubiquitin-proteasome proteolytic pathway. The chain is Ubiquitin domain-containing protein DSK2 (DSK2) from Saccharomyces cerevisiae (strain ATCC 204508 / S288c) (Baker's yeast).